A 218-amino-acid chain; its full sequence is Host range factor 1 (218 aa).

Functionally, facilitates AcMNPV replication in two non-permissive cell lines, IPLB-Ld652Y and IPLB-LdFB. This is Host range factor 1 (HRF-1) from Lepidoptera (butterflies and moths).